The primary structure comprises 199 residues: ATP-dependent Clp protease proteolytic subunit 2 (199 aa).

Serine 95 serves as the catalytic Nucleophile. The active site involves histidine 120.

Belongs to the peptidase S14 family. As to quaternary structure, fourteen ClpP subunits assemble into 2 heptameric rings which stack back to back to give a disk-like structure with a central cavity, resembling the structure of eukaryotic proteasomes.

It localises to the cytoplasm. The catalysed reaction is Hydrolysis of proteins to small peptides in the presence of ATP and magnesium. alpha-casein is the usual test substrate. In the absence of ATP, only oligopeptides shorter than five residues are hydrolyzed (such as succinyl-Leu-Tyr-|-NHMec, and Leu-Tyr-Leu-|-Tyr-Trp, in which cleavage of the -Tyr-|-Leu- and -Tyr-|-Trp bonds also occurs).. Its function is as follows. Cleaves peptides in various proteins in a process that requires ATP hydrolysis. Has a chymotrypsin-like activity. Plays a major role in the degradation of misfolded proteins. This Mycolicibacterium paratuberculosis (strain ATCC BAA-968 / K-10) (Mycobacterium paratuberculosis) protein is ATP-dependent Clp protease proteolytic subunit 2.